Here is a 208-residue protein sequence, read N- to C-terminus: Guanylate kinase (208 aa).

Residues 21-201 (GRVVVLSGPS…ACAELVSLLV (181 aa)) form the Guanylate kinase-like domain. 28 to 35 (GPSAVGKS) serves as a coordination point for ATP.

Belongs to the guanylate kinase family.

The protein resides in the cytoplasm. The enzyme catalyses GMP + ATP = GDP + ADP. Functionally, essential for recycling GMP and indirectly, cGMP. In Mycobacterium bovis (strain ATCC BAA-935 / AF2122/97), this protein is Guanylate kinase (gmk).